Consider the following 489-residue polypeptide: Betaine aldehyde dehydrogenase (489 aa).

K(+) is bound at residue Asn93. 150–152 (GAW) provides a ligand contact to NAD(+). Catalysis depends on Lys162, which acts as the Charge relay system. Residue 176 to 179 (KPSE) coordinates NAD(+). Residue Val180 participates in K(+) binding. 229 to 232 (EVGT) serves as a coordination point for NAD(+). Leu245 lines the K(+) pocket. The active-site Proton acceptor is the Glu251. Gly253, Cys285, and Glu386 together coordinate NAD(+). Cys285 acts as the Nucleophile in catalysis. A Cysteine sulfenic acid (-SOH) modification is found at Cys285. Lys456 and Gly459 together coordinate K(+). The active-site Charge relay system is the Glu463.

This sequence belongs to the aldehyde dehydrogenase family. Dimer of dimers. It depends on K(+) as a cofactor.

The enzyme catalyses betaine aldehyde + NAD(+) + H2O = glycine betaine + NADH + 2 H(+). It functions in the pathway amine and polyamine biosynthesis; betaine biosynthesis via choline pathway; betaine from betaine aldehyde: step 1/1. Involved in the biosynthesis of the osmoprotectant glycine betaine. Catalyzes the irreversible oxidation of betaine aldehyde to the corresponding acid. In Chromohalobacter salexigens (strain ATCC BAA-138 / DSM 3043 / CIP 106854 / NCIMB 13768 / 1H11), this protein is Betaine aldehyde dehydrogenase.